The chain runs to 38 residues: Photosystem II reaction center protein X (38 aa).

The chain crosses the membrane as a helical span at residues 9–29; that stretch reads IASLTAGALVLSAIGIALIII.

This sequence belongs to the PsbX family. Type 1 subfamily. In terms of assembly, PSII is composed of 1 copy each of membrane proteins PsbA, PsbB, PsbC, PsbD, PsbE, PsbF, PsbH, PsbI, PsbJ, PsbK, PsbL, PsbM, PsbT, PsbX, PsbY, PsbZ, Psb30/Ycf12, at least 3 peripheral proteins of the oxygen-evolving complex and a large number of cofactors. It forms dimeric complexes.

The protein localises to the plastid. The protein resides in the chloroplast thylakoid membrane. Functionally, involved in the binding and/or turnover of quinones at the Q(B) site of photosystem II (PSII). PSII is a light-driven water plastoquinone oxidoreductase, using light energy to abstract electrons from H(2)O, generating a proton gradient subsequently used for ATP formation. The sequence is that of Photosystem II reaction center protein X from Thalassiosira pseudonana (Marine diatom).